The primary structure comprises 430 residues: Formate-dependent phosphoribosylglycinamide formyltransferase (430 aa).

Residues 26–27 and Glu-86 contribute to the N(1)-(5-phospho-beta-D-ribosyl)glycinamide site; that span reads EL. ATP-binding positions include Arg-118, Lys-159, 199 to 202, and Glu-207; that span reads EEHI. The region spanning 123 to 319 is the ATP-grasp domain; it reads ETLVKEAKVP…EFALHLRAVL (197 aa). Mg(2+) is bound by residues Glu-276 and Glu-288. N(1)-(5-phospho-beta-D-ribosyl)glycinamide contacts are provided by residues Asp-295, Lys-375, and 382–383; that span reads RR.

The protein belongs to the PurK/PurT family. In terms of assembly, homodimer.

It carries out the reaction N(1)-(5-phospho-beta-D-ribosyl)glycinamide + formate + ATP = N(2)-formyl-N(1)-(5-phospho-beta-D-ribosyl)glycinamide + ADP + phosphate + H(+). It functions in the pathway purine metabolism; IMP biosynthesis via de novo pathway; N(2)-formyl-N(1)-(5-phospho-D-ribosyl)glycinamide from N(1)-(5-phospho-D-ribosyl)glycinamide (formate route): step 1/1. In terms of biological role, involved in the de novo purine biosynthesis. Catalyzes the transfer of formate to 5-phospho-ribosyl-glycinamide (GAR), producing 5-phospho-ribosyl-N-formylglycinamide (FGAR). Formate is provided by PurU via hydrolysis of 10-formyl-tetrahydrofolate. The polypeptide is Formate-dependent phosphoribosylglycinamide formyltransferase (Pyrococcus horikoshii (strain ATCC 700860 / DSM 12428 / JCM 9974 / NBRC 100139 / OT-3)).